The chain runs to 351 residues: MEKKNYSALFENLQNRSNPEKLQEITTKFFSDNPDVKYNDVLKYITLAMNGVSPEYTNKSREAGEKVKLHLQDILLDVEYQYQGSVMTNTHIKGYSDIDLLVISDKFYTLDERNIIENLEVNKFSLSQEKIQKLQQELLGKKYHSATNDLKNNRLLSEQKLSSVYEICDITHPKAIKITNKSMGRDVDIVIANWYDDAQSVINNRQIEYRGIQIYNKRSNTIENRDFPFLSIQRINKRSSETKGRLKKMIRFLKNLKADSDEKIELSSFDINAICYNIEKNKYLHSNKYQLVPILYEQLNELVSNSNKINSLKSVDGHEYIFSRNNIDKKESLKMLLQEVKIIYSNLQSYL.

It belongs to the CD-NTase family. E05 subfamily.

The enzyme catalyses 2 GTP = 3',3'-c-di-GMP + 2 diphosphate. In terms of biological role, cyclic nucleotide synthase (second messenger synthase) of a CBASS antivirus system. CBASS (cyclic oligonucleotide-based antiphage signaling system) provides immunity against bacteriophage. The CD-NTase protein synthesizes cyclic nucleotides in response to infection; these serve as specific second messenger signals. The signals activate a diverse range of effectors, leading to bacterial cell death and thus abortive phage infection. A type I-D(GG) CBASS system. Functionally, cyclic dinucleotide synthase that catalyzes the synthesis of c-di-GMP, has no activity with other NTP substrates. The sequence is that of c-di-GMP synthase (cdnE) from Capnocytophaga granulosa (strain ATCC 51502 / DSM 11449 / JCM 8566 / LMG 16022 / NCTC 12948 / B0611).